Here is a 380-residue protein sequence, read N- to C-terminus: Cytochrome b (380 aa).

A run of 4 helical transmembrane segments spans residues 34 to 54 (FGSL…FLAM), 78 to 99 (WLVR…YLHI), 114 to 134 (WNIG…GYVL), and 179 to 199 (FFAF…LHLL). Heme b is bound by residues H84 and H98. Heme b-binding residues include H183 and H197. H202 lines the a ubiquinone pocket. 4 helical membrane passes run 227-247 (YKDT…SMLS), 289-309 (LGGV…PMIH), 321-341 (MTQF…WIGG), and 348-368 (FIEI…IFMP).

The protein belongs to the cytochrome b family. As to quaternary structure, the cytochrome bc1 complex contains 3 respiratory subunits (MT-CYB, CYC1 and UQCRFS1), 2 core proteins (UQCRC1 and UQCRC2) and probably 6 low-molecular weight proteins. Requires heme b as cofactor.

It localises to the mitochondrion inner membrane. Component of the ubiquinol-cytochrome c reductase complex (complex III or cytochrome b-c1 complex) that is part of the mitochondrial respiratory chain. The b-c1 complex mediates electron transfer from ubiquinol to cytochrome c. Contributes to the generation of a proton gradient across the mitochondrial membrane that is then used for ATP synthesis. The chain is Cytochrome b (mt-cyb) from Ranodon sibiricus (Siberian salamander).